The chain runs to 428 residues: Enolase (428 aa).

(2R)-2-phosphoglycerate is bound at residue Gln165. The Proton donor role is filled by Glu207. Residues Asp244, Glu283, and Asp310 each contribute to the Mg(2+) site. Residues Lys335, Arg364, Ser365, and Lys386 each contribute to the (2R)-2-phosphoglycerate site. Lys335 (proton acceptor) is an active-site residue.

It belongs to the enolase family. The cofactor is Mg(2+).

The protein resides in the cytoplasm. It is found in the secreted. Its subcellular location is the cell surface. It catalyses the reaction (2R)-2-phosphoglycerate = phosphoenolpyruvate + H2O. The protein operates within carbohydrate degradation; glycolysis; pyruvate from D-glyceraldehyde 3-phosphate: step 4/5. Functionally, catalyzes the reversible conversion of 2-phosphoglycerate (2-PG) into phosphoenolpyruvate (PEP). It is essential for the degradation of carbohydrates via glycolysis. This is Enolase from Chlamydia pneumoniae (Chlamydophila pneumoniae).